Consider the following 291-residue polypeptide: Stomatin-like protein 3 (291 aa).

S7 is subject to Phosphoserine. Residues 29 to 49 (WILFSLSFLLVIITFPISIWM) traverse the membrane as a helical; Signal-anchor for type III membrane protein segment. Residues 50-291 (CLKIIKEYER…DNHKKLPNKA (242 aa)) are Cytoplasmic-facing. S241 carries the post-translational modification Phosphoserine.

Belongs to the band 7/mec-2 family. As to quaternary structure, homodimer. Interacts with PIEZO1 and PIEZO2.

Its subcellular location is the cell membrane. In terms of biological role, required for the function of many mechanoreceptors. Modulate mechanotransduction channels and acid-sensing ion channels (ASIC) proteins. Potentiates PIEZO1 and PIEZO2 function by increasing their sensitivity to mechanical stimulations. This Homo sapiens (Human) protein is Stomatin-like protein 3 (STOML3).